The chain runs to 429 residues: Adenylosuccinate synthetase (429 aa).

Residues 12-18 (GDEGKGK) and 40-42 (GHT) each bind GTP. The Proton acceptor role is filled by D13. Mg(2+)-binding residues include D13 and G40. IMP is bound by residues 13–16 (DEGK), 38–41 (NAGH), T127, R141, Q222, T237, and R301. H41 functions as the Proton donor in the catalytic mechanism. 297-303 (ATTGRPR) contributes to the substrate binding site. Residues R303, 329 to 331 (KLD), and 411 to 413 (SLG) contribute to the GTP site.

Belongs to the adenylosuccinate synthetase family. As to quaternary structure, homodimer. Mg(2+) is required as a cofactor.

The protein resides in the cytoplasm. The enzyme catalyses IMP + L-aspartate + GTP = N(6)-(1,2-dicarboxyethyl)-AMP + GDP + phosphate + 2 H(+). The protein operates within purine metabolism; AMP biosynthesis via de novo pathway; AMP from IMP: step 1/2. Functionally, plays an important role in the de novo pathway of purine nucleotide biosynthesis. Catalyzes the first committed step in the biosynthesis of AMP from IMP. This chain is Adenylosuccinate synthetase, found in Endomicrobium trichonymphae.